The chain runs to 367 residues: Peptide chain release factor 2 (367 aa).

The residue at position 250 (Q250) is an N5-methylglutamine.

It belongs to the prokaryotic/mitochondrial release factor family. In terms of processing, methylated by PrmC. Methylation increases the termination efficiency of RF2.

The protein resides in the cytoplasm. In terms of biological role, peptide chain release factor 2 directs the termination of translation in response to the peptide chain termination codons UGA and UAA. The sequence is that of Peptide chain release factor 2 from Kineococcus radiotolerans (strain ATCC BAA-149 / DSM 14245 / SRS30216).